A 487-amino-acid polypeptide reads, in one-letter code: MVASAPASAGTKGVIRQVIGPVLDVEFPAGKLPKIYNALRIEGKNPAGDDVALTAEVQQLLGDHRVRAVAMSGTDGLVRGMEAVDTGAPISVPVGEGTLGRIFNVLGEPVDEQGPVNTTATAPIHRDAPNITELETKPKVFETGIKVIDLLAPYRQGGKVGLFGGAGVGKTVLIQELINNIAKEHGGVSVFGGVGERTREGNDLYEEFKESGVINADDLSKSKVALCYGQMNEPPGARMRVGLSALTMAEHFRDVNKQDVLLFVDNIFRFVQAGSEVSALLGRMPSAVGYQPTLGTDVGALQERVASTVEGSITSIQAVYVPADDLTDPAPATTFAHLDATTVLNRALASKGIYPAVDPLDSTSTMLQPAVVGDEHYRTARAVQSTLQRYKELQDIIAILGLDELSEDDRRTVDRARKVEKFLSQPFFVAEIFTGMPGKYVKLEETIAGFNQILAGELDSLPEAAFYLVGNIEEVKAKAEKIAAETK.

164–171 (GGAGVGKT) lines the ATP pocket.

This sequence belongs to the ATPase alpha/beta chains family. As to quaternary structure, F-type ATPases have 2 components, CF(1) - the catalytic core - and CF(0) - the membrane proton channel. CF(1) has five subunits: alpha(3), beta(3), gamma(1), delta(1), epsilon(1). CF(0) has four main subunits: a(1), b(1), b'(1) and c(9-12).

It is found in the cellular thylakoid membrane. The enzyme catalyses ATP + H2O + 4 H(+)(in) = ADP + phosphate + 5 H(+)(out). Functionally, produces ATP from ADP in the presence of a proton gradient across the membrane. The catalytic sites are hosted primarily by the beta subunits. The chain is ATP synthase subunit beta from Synechococcus sp. (strain CC9605).